Consider the following 468-residue polypeptide: TFIIA-alpha and beta-like factor (468 aa).

Disordered stretches follow at residues 215–236 (DRRL…LSLP) and 379–416 (DSVS…SEQD). Over residues 380–391 (SVSNEDSTANSS) the composition is skewed to polar residues. A compositionally biased stretch (acidic residues) spans 401 to 416 (PEEDPLNSGDDVSEQD).

Belongs to the TFIIA subunit 1 family. Testis specific. Expressed in pachytene spermatocytes and haploid spermatids.

Its subcellular location is the nucleus. May function as a testis specific transcription factor. Binds DNA in conjunction with GTF2A2 and TBP (the TATA-binding protein) and together with GTF2A2, allows mRNA transcription. In Mus musculus (Mouse), this protein is TFIIA-alpha and beta-like factor (Gtf2a1l).